Reading from the N-terminus, the 435-residue chain is Serine--tRNA ligase (435 aa).

242–244 (TAE) contacts L-serine. 273–275 (RSE) provides a ligand contact to ATP. Position 296 (glutamate 296) interacts with L-serine. Residue 360–363 (EISS) participates in ATP binding. Serine 396 serves as a coordination point for L-serine.

Belongs to the class-II aminoacyl-tRNA synthetase family. Type-1 seryl-tRNA synthetase subfamily. In terms of assembly, homodimer. The tRNA molecule binds across the dimer.

It localises to the cytoplasm. The catalysed reaction is tRNA(Ser) + L-serine + ATP = L-seryl-tRNA(Ser) + AMP + diphosphate + H(+). It carries out the reaction tRNA(Sec) + L-serine + ATP = L-seryl-tRNA(Sec) + AMP + diphosphate + H(+). It participates in aminoacyl-tRNA biosynthesis; selenocysteinyl-tRNA(Sec) biosynthesis; L-seryl-tRNA(Sec) from L-serine and tRNA(Sec): step 1/1. Catalyzes the attachment of serine to tRNA(Ser). Is also able to aminoacylate tRNA(Sec) with serine, to form the misacylated tRNA L-seryl-tRNA(Sec), which will be further converted into selenocysteinyl-tRNA(Sec). In Vibrio atlanticus (strain LGP32) (Vibrio splendidus (strain Mel32)), this protein is Serine--tRNA ligase.